A 1311-amino-acid chain; its full sequence is Protein PARALOG OF AIPP2 (1311 aa).

Disordered stretches follow at residues 1–21, 114–141, and 178–280; these read MADR…KVES, ISDD…VSAS, and GNKD…EMVE. A compositionally biased stretch (basic and acidic residues) spans 213–240; that stretch reads NHDDRVSSEKGNFKEKSRPGGNKERQEP. Positions 258-270 are enriched in low complexity; that stretch reads SKSSSSNSSAVSE. The segment at 283–334 adopts a PHD-type zinc-finger fold; that stretch reads VKVCDICGDAGREDLLAICSGCSDGAEHTYCMREMLDEVPEGDWLCEECAEE. Cys-286, Cys-289, Cys-301, Cys-304, His-310, Cys-313, Cys-328, and Cys-331 together coordinate Zn(2+). Residues 328–348 are a coiled coil; sequence CEECAEEAEKQKQEAKRKRET. Disordered stretches follow at residues 369–390, 411–440, 460–701, 975–1050, 1059–1078, 1087–1138, 1152–1186, and 1249–1311; these read PDAK…ILPR, NHQT…FLKS, HPRQ…EDLN, TNPQ…PSKK, EAGV…GDSL, EQEL…NPAN, NDGL…GIMK, and LSRS…DLPR. Over residues 411–431 the composition is skewed to polar residues; the sequence is NHQTSFSDDTESARSAGSQLQ. A compositionally biased stretch (basic and acidic residues) spans 460–472; that stretch reads HPRQKTGKEDTAL. The span at 487 to 502 shows a compositional bias: polar residues; the sequence is PSRTTDAGNSGGSDSQ. Residues 512–528 are compositionally biased toward basic and acidic residues; sequence HSQEGKSLKQVKDRNRE. The span at 529–552 shows a compositional bias: polar residues; sequence ANASASSIDQKLKSRGNSSVSHAN. The span at 553 to 566 shows a compositional bias: basic and acidic residues; that stretch reads NNRDLKGLQSDGKR. Residues 569–607 are compositionally biased toward polar residues; the sequence is LTKQVSNLSRNRLENSVVSGGDISTNEKCSASEQSSSQA. Positions 640–653 are enriched in basic and acidic residues; that stretch reads VPREVGKKSKEAFS. Polar residues-rich tracts occupy residues 668–694, 977–988, and 1014–1025; these read PSSQ…STTK, PQKNTSLPTSNV, and LRESSSNGIETR. Over residues 1026-1050 the composition is skewed to basic and acidic residues; sequence NGTDARSHENPNNRESSIERSPSKK. The span at 1087-1096 shows a compositional bias: basic and acidic residues; sequence EQELGGRKDL. Over residues 1250–1263 the composition is skewed to polar residues; that stretch reads SRSSNSGEQSNNSM. A coiled-coil region spans residues 1256–1276; sequence GEQSNNSMNKEKQKADEEEED. Residues 1280-1289 are compositionally biased toward low complexity; sequence VAASLSLSLS.

In terms of assembly, part of the BAH-PHD bivalent histone reader complex that contains AIPP2, PAIPP2 and AIPP3/BDT1; the BAH-PHD module associates with CPL2 to form the BAH-PHD-CPL2 complex (BPC) for transcriptional repression. Binds directly to AIPP3/BDT1 and CPL2, but not to AIPP2. In terms of tissue distribution, expressed ubiquitously.

Its function is as follows. Together with AIPP2 and AIPP3/BDT1, cooperates to form a BAH-PHD bivalent histone reader complex able to read histone H3 lysine 27 trimethylation (H3K27me3) and low-methylated H3K4 histone marks in order to regulate transcription, especially to prevent early flowering; promotes AIPP3/BDT1 binding to H3K27me3. CPL2 is subsequently recruited to form a BAH-PHD-CPL2 complex (BPC) in order to silence several H3K27me3 and low-methylated H3K4 enriched loci, including AGO5, via the phosphorylation state-dependent inhibition of Pol II release from the transcriptional start site (e.g. Ser5P-Pol II dephosphorylation). The BPC complex represses flowering by inhibiting the expression of several genes, including AGL6, FT, FUL and SOC1. This chain is Protein PARALOG OF AIPP2, found in Arabidopsis thaliana (Mouse-ear cress).